The primary structure comprises 148 residues: Putative nickel-responsive regulator (148 aa).

Ni(2+)-binding residues include His88, His99, His101, and Cys107.

The protein belongs to the transcriptional regulatory CopG/NikR family. As to quaternary structure, homotetramer. Requires Ni(2+) as cofactor.

In terms of biological role, transcriptional regulator. This is Putative nickel-responsive regulator from Helicobacter pylori (strain ATCC 700392 / 26695) (Campylobacter pylori).